The sequence spans 220 residues: Glycerol-3-phosphate acyltransferase (220 aa).

Helical transmembrane passes span 11–31 (INVIFTLLGYLIGGIPFGYAL), 70–90 (LLVLILDLFKGMFAVFLSKLF), 96–116 (LQWMVAIASILGHCYSPFLNF), 127–147 (GSVVLLIPIESLIGLTVWFFV), 153–173 (ISSLASILGVGTATVLIFFVP), and 192–212 (PMVLIFIFTLIKHAGNIFNLL).

The protein belongs to the PlsY family. As to quaternary structure, probably interacts with PlsX.

The protein resides in the cell inner membrane. The catalysed reaction is an acyl phosphate + sn-glycerol 3-phosphate = a 1-acyl-sn-glycero-3-phosphate + phosphate. It functions in the pathway lipid metabolism; phospholipid metabolism. Functionally, catalyzes the transfer of an acyl group from acyl-phosphate (acyl-PO(4)) to glycerol-3-phosphate (G3P) to form lysophosphatidic acid (LPA). This enzyme utilizes acyl-phosphate as fatty acyl donor, but not acyl-CoA or acyl-ACP. The polypeptide is Glycerol-3-phosphate acyltransferase (Helicobacter pylori (strain J99 / ATCC 700824) (Campylobacter pylori J99)).